Reading from the N-terminus, the 109-residue chain is Protein reprimo (109 aa).

Asn7 and Asn18 each carry an N-linked (GlcNAc...) asparagine glycan. A helical transmembrane segment spans residues 56–76; it reads VVQIAVMCVLSLTVVFGIFFL. Ser98 carries the phosphoserine modification.

It belongs to the reprimo family.

It is found in the cytoplasm. It localises to the membrane. May be involved in the regulation of p53-dependent G2 arrest of the cell cycle. Seems to induce cell cycle arrest by inhibiting CDK1 activity and nuclear translocation of the CDC2 cyclin B1 complex. The polypeptide is Protein reprimo (RPRM) (Homo sapiens (Human)).